The sequence spans 369 residues: MNTQSQTIVVKLGTSVLTGGTLKLDRAHMVELVRQCVQLKKAGHQVIVVTSGAIAAGREHLNYPELPKTMANKQLLAAVGQSCLIQAWQSLFGIYGVDVGQMLLTRADLDDRERYLNARDMLQALLKNNIVPIVNENDAVATNEIKVGDNDNLSALVGILAGADKLLLLTDQSGLFTADPRKDPKAELIKEVHTIDETLRKIAGGSGTTLGTGGMATKLQAADVARRAGIEVIIAAGSAENVITDVVNSKPQGTKFLPVECALESRKRWILAGPPSKGSIVIDEGAVNAVQQKGSSLLSKGITEVSGHFVRGGVAKIVNTKGELIARGISRYSSDDLSKILGKHSQDIYAVLGYEYGPVAIHRDDLVLI.

ATP is bound at residue K11. Substrate-binding residues include S51, D138, and N150. Residues 170–171 (TD) and 212–218 (TGGMATK) contribute to the ATP site. The region spanning 277-355 (KGSIVIDEGA…QDIYAVLGYE (79 aa)) is the PUA domain.

It belongs to the glutamate 5-kinase family.

Its subcellular location is the cytoplasm. The enzyme catalyses L-glutamate + ATP = L-glutamyl 5-phosphate + ADP. It functions in the pathway amino-acid biosynthesis; L-proline biosynthesis; L-glutamate 5-semialdehyde from L-glutamate: step 1/2. Functionally, catalyzes the transfer of a phosphate group to glutamate to form L-glutamate 5-phosphate. This is Glutamate 5-kinase from Aliivibrio fischeri (strain ATCC 700601 / ES114) (Vibrio fischeri).